The primary structure comprises 634 residues: Chaperone protein HtpG (634 aa).

The tract at residues 1 to 342 (MTVASHKETL…SNDLPLNISR (342 aa)) is a; substrate-binding. Residues 343–559 (EILQNNRVID…QHDMSGYLER (217 aa)) form a b region. A c region spans residues 560–634 (LLKEAGQQAP…LNSLLLAMAD (75 aa)).

Belongs to the heat shock protein 90 family. As to quaternary structure, homodimer.

The protein resides in the cytoplasm. Functionally, molecular chaperone. Has ATPase activity. The polypeptide is Chaperone protein HtpG (Nitrosococcus oceani (strain ATCC 19707 / BCRC 17464 / JCM 30415 / NCIMB 11848 / C-107)).